The sequence spans 501 residues: DELTA-alicitoxin-Pse2a (501 aa).

Positions M1 to C22 are cleaved as a signal peptide. Positions S23–N35 are excised as a propeptide. In terms of domain architecture, MACPF spans S23–L359. Residues A135–S159 are a coiled coil. The EGF-like domain maps to V388–C422. 3 disulfide bridges follow: C389/C402, C396/C410, and C412/C422.

It is found in the secreted. It localises to the nematocyst. In terms of biological role, causes lethal toxicity to the shrimp Palaemon paucidence, and hemolytic activity toward sheep red blood cells. This chain is DELTA-alicitoxin-Pse2a, found in Phyllodiscus semoni (Night anemone).